A 265-amino-acid chain; its full sequence is Transcription factor BHLH089 (265 aa).

The interval methionine 1–aspartate 132 is disordered. Gly residues-rich tracts occupy residues leucine 17–glycine 29 and serine 44–alanine 53. The segment covering serine 95–arginine 105 has biased composition (polar residues). Residues glutamine 142 to arginine 155 form a basic motif; degenerate region. The 51-residue stretch at glutamine 142–leucine 192 folds into the bHLH domain. The tract at residues glutamate 156–leucine 192 is helix-loop-helix motif.

It belongs to the bHLH protein family. Interacts with RSS3.

The protein localises to the nucleus. Transcription factor that may regulate jasmonate-regulated genes. This chain is Transcription factor BHLH089, found in Oryza sativa subsp. japonica (Rice).